A 338-amino-acid polypeptide reads, in one-letter code: Solute carrier family 35 member B1 homolog (338 aa).

9 helical membrane-spanning segments follow: residues Phe9–Lys29, Leu53–Ile73, Gly84–Met104, Thr111–Gly131, Tyr135–Tyr155, Thr168–Val188, Leu213–Ile233, Leu244–Gly264, and Val284–Ala304. The Di-lysine motif motif lies at Lys334–Ser338.

Belongs to the nucleotide-sugar transporter family. SLC35B subfamily.

The protein localises to the endoplasmic reticulum membrane. Its function is as follows. Probable sugar transporter. This Drosophila melanogaster (Fruit fly) protein is Solute carrier family 35 member B1 homolog (meigo).